Here is a 386-residue protein sequence, read N- to C-terminus: Diels-Alderase phm7 (386 aa).

Residues 1-223 (MSEPTSSSSL…MVRGWSARPW (223 aa)) form a beta-sandwich motif region. Substrate is bound by residues glutamate 51, asparagine 84, and lysine 356. A beta-barrel motif region spans residues 223-386 (WPTFMNDAYY…FGGQLQIPVP (164 aa)).

Belongs to the Diels-Alderase family.

It participates in secondary metabolite biosynthesis. With respect to regulation, 3-aminomethyl-p-menthane which is similar to the phomasetin substructure, dose-dependently inhibits phm7 activity in vitro and production of phomasetin in the fungus. Diels-Alderase; part of the gene cluster that mediates the biosynthesis of the trans-fused decalin-containing tetramic acid phomasetin, the stereochemical opposite of the HIV-1 integrase inhibitor equisetin. The PKS module of phm1 together with the enoylreductase phm4 catalyze the formation of the polyketide unit which is then conjugated to L-serine by the condensation domain of the phm1 NRPS module. Activity of the Dieckmann cyclase domain (RED) of phm1 results in release of the Dieckmann product intermediate. The Diels-Alderase phm7 then uses the Dieckmann product of phm1 as substrate and catalyzes the Diels-Alder cycloaddition to form the decalin ring of N-desmethylphomasetin. N-desmethylphomasetin is further methylated to phomasetin by the methyltransferase phm5. The polypeptide is Diels-Alderase phm7 (Pyrenochaetopsis sp).